The primary structure comprises 410 residues: Imidazolonepropionase (410 aa).

Fe(3+) is bound by residues His73 and His75. Zn(2+)-binding residues include His73 and His75. Positions 82, 145, and 178 each coordinate 4-imidazolone-5-propanoate. Position 145 (Tyr145) interacts with N-formimidoyl-L-glutamate. Residue His243 coordinates Fe(3+). Residue His243 coordinates Zn(2+). Residue Gln246 participates in 4-imidazolone-5-propanoate binding. Residue Asp318 participates in Fe(3+) binding. Zn(2+) is bound at residue Asp318. N-formimidoyl-L-glutamate contacts are provided by Asn320 and Gly322. Ser323 lines the 4-imidazolone-5-propanoate pocket.

The protein belongs to the metallo-dependent hydrolases superfamily. HutI family. It depends on Zn(2+) as a cofactor. The cofactor is Fe(3+).

The protein localises to the cytoplasm. It catalyses the reaction 4-imidazolone-5-propanoate + H2O = N-formimidoyl-L-glutamate. The protein operates within amino-acid degradation; L-histidine degradation into L-glutamate; N-formimidoyl-L-glutamate from L-histidine: step 3/3. Functionally, catalyzes the hydrolytic cleavage of the carbon-nitrogen bond in imidazolone-5-propanoate to yield N-formimidoyl-L-glutamate. It is the third step in the universal histidine degradation pathway. The chain is Imidazolonepropionase from Shewanella baltica (strain OS223).